The primary structure comprises 558 residues: Atlastin-1 (558 aa).

The interval 1–27 is disordered; the sequence is MAKNRRDRNSWGGFSEKTYEWSSEEEE. The interval 1-34 is N-terminal hypervariable region (HVR); that stretch reads MAKNRRDRNSWGGFSEKTYEWSSEEEEPVKKAGP. Residues 1-449 are Cytoplasmic-facing; it reads MAKNRRDRNS…NIFHAARTPA (449 aa). Phosphoserine is present on residues Ser10, Ser22, and Ser23. The GB1/RHD3-type G domain maps to 64–309; the sequence is DKEVVAVSVA…LIPWLLSPES (246 aa). The GDP site is built by Arg77, Lys78, Gly79, Lys80, Ser81, Phe82, Gln148, Arg217, Asp218, Val276, and Asn279. Positions 77, 78, 79, 80, 81, and 82 each coordinate GTP. Ser81 contributes to the Mg(2+) binding site. GTP-binding residues include Arg217, Asp218, and Val276. A 3HB (three-helix bundle) domain region spans residues 347–438; that stretch reads MLQATAEANN…YIQYIKHNDS (92 aa). An N6-acetyllysine modification is found at Lys395. The stretch at 412–439 forms a coiled coil; the sequence is EFSRRYLQQLESEIDELYIQYIKHNDSK. Residues 439 to 447 are linker; the sequence is KNIFHAART. A helical membrane pass occupies residues 450–470; it reads TLFVVIFITYVIAGVTGFIGL. A topological domain (lumenal) is located at residue Asp471. A helical membrane pass occupies residues 472 to 492; that stretch reads IIASLCNMIMGLTLITLCTWA. The Cytoplasmic segment spans residues 493-558; the sequence is YIRYSGEYRE…STEQSEKKKM (66 aa). The interval 521 to 558 is autoinhibitory domain; sequence NEALYKLYSAAATHRHLYHQAFPTPKSESTEQSEKKKM.

It belongs to the TRAFAC class dynamin-like GTPase superfamily. GB1/RHD3 GTPase family. GB1 subfamily. In terms of assembly, monomeric and homodimeric. The homodimer, transiently formed by two molecules on opposing membranes, is the active form mediating ER membrane fusion. Interacts with REEP1, REEP5, RTN3 and RTN4 (via the transmembrane region); these proteins are involved in endoplasmic reticulum tubular network organization. Interacts with ZFYVE27; both proteins are involved in endoplasmic reticulum tubular network organization. Interacts with ARL6IP1; both proteins are involved in endoplasmic reticulum tubular network organization. Interacts with SPAST; the interaction is direct, could recruit SPAST to Golgi membranes. Interacts (via N-terminal region) with MAP4K4 (via CNH regulatory domain). May interact with TMED2. Interacts with CPT1C. Phosphorylated. Phosphorylation, by different kinases, of the N-terminal hypervariable region (HVR) regulates the ATL1-mediated membrane tethering step.

Its subcellular location is the endoplasmic reticulum membrane. The protein localises to the golgi apparatus membrane. It is found in the cell projection. The protein resides in the axon. It catalyses the reaction GTP + H2O = GDP + phosphate + H(+). In terms of biological role, atlastin-1 (ATL1) is a membrane-anchored GTPase that mediates the GTP-dependent fusion of endoplasmic reticulum (ER) membranes, maintaining the continuous ER network. It facilitates the formation of three-way junctions where ER tubules intersect. Two atlastin-1 on neighboring ER tubules bind GTP and form loose homodimers through the GB1/RHD3-type G domains and 3HB regions. Upon GTP hydrolysis, the 3HB regions tighten, pulling the membranes together to drive their fusion. After fusion, the homodimer disassembles upon release of inorganic phosphate (Pi). Subsequently, GDP dissociates, resetting the monomers to a conformation ready for a new fusion cycle. May also regulate more or less directly Golgi biogenesis. Indirectly regulates axonal development. This Pongo abelii (Sumatran orangutan) protein is Atlastin-1.